A 667-amino-acid chain; its full sequence is Single-minded homolog 2 (667 aa).

Positions 1–53 (MKEKSKNAAKTRREKENGEFYELAKLLPLPSAITSQLDKASIIRLTTSYLKMR) constitute a bHLH domain. 2 consecutive PAS domains span residues 77–149 (AKEL…LHHH) and 218–288 (PPSA…LVKG). The 44-residue stretch at 292–335 (TKYYRLLSKRGGWVWVQSYATVVHNSRSSRPHCIVSVNYVLTEI) folds into the PAC domain. The Single-minded C-terminal domain occupies 336 to 667 (EYKELQLSLE…GASVIITNGR (332 aa)). 3 disordered regions span residues 356 to 389 (WRTA…YPPQ), 409 to 428 (ASPP…SESS), and 500 to 520 (SSSS…RHSL). The Nuclear localization signal motif lies at 367–386 (RKLVKPKNTKMKTKLRTNPY). Positions 369–381 (LVKPKNTKMKTKL) are enriched in basic residues. Over residues 409–419 (ASPPASAAAPP) the composition is skewed to low complexity.

Efficient DNA binding requires dimerization with another bHLH protein. Heterodimer of SIM2 and ARNT.

The protein localises to the nucleus. Functionally, transcription factor that may be a master gene of CNS development in cooperation with Arnt. It may have pleiotropic effects in the tissues expressed during development. The sequence is that of Single-minded homolog 2 (SIM2) from Homo sapiens (Human).